We begin with the raw amino-acid sequence, 238 residues long: Ribosomal RNA small subunit methyltransferase G (238 aa).

S-adenosyl-L-methionine is bound by residues glycine 77, phenylalanine 82, 128–129 (AE), and arginine 147.

The protein belongs to the methyltransferase superfamily. RNA methyltransferase RsmG family.

It is found in the cytoplasm. Specifically methylates the N7 position of guanine in position 535 of 16S rRNA. In Lysinibacillus sphaericus (strain C3-41), this protein is Ribosomal RNA small subunit methyltransferase G.